A 136-amino-acid chain; its full sequence is MQREHKTHNKLSFIYITPLYISPINQTRLTYLSSSFLLSSSSKMCLSSSETFSDTPTRLVLYLKTQSHVRIPRLSRRRRMWREEKKMEMINLKLYVENQNIIRENEKLKKKALLLHQENKTLFSLLQTKKLSSVHK.

Residues 97-122 (ENQNIIRENEKLKKKALLLHQENKTL) are a coiled coil.

As to quaternary structure, interacts with REV. In terms of tissue distribution, expressed in the adaxial epidermis of the cotyledons and in the vascular cylinder of wild-type torpedo stage embryos.

Competitive inhibitor of the HD-ZIPIII transcription factors in shoot apical meristem (SAM) development. Acts by forming non-functional heterodimers. Part of a negative feedback loop. Essential for proper functioning of stem cells in the SAM. This is Protein LITTLE ZIPPER 1 from Arabidopsis thaliana (Mouse-ear cress).